Reading from the N-terminus, the 609-residue chain is UvrABC system protein C (609 aa).

The region spanning 19 to 97 (ASPGCYLWKS…IKKHNPRFNV (79 aa)) is the GIY-YIG domain. Positions 208–243 (ESLVSDLNIKMSNASERLDFEKAARYRDMLQRIQNF) constitute a UVR domain.

The protein belongs to the UvrC family. Interacts with UvrB in an incision complex.

Its subcellular location is the cytoplasm. In terms of biological role, the UvrABC repair system catalyzes the recognition and processing of DNA lesions. UvrC both incises the 5' and 3' sides of the lesion. The N-terminal half is responsible for the 3' incision and the C-terminal half is responsible for the 5' incision. The polypeptide is UvrABC system protein C (Leptospira interrogans serogroup Icterohaemorrhagiae serovar Lai (strain 56601)).